We begin with the raw amino-acid sequence, 376 residues long: Carbamoyl phosphate synthase small chain (376 aa).

Residues 1 to 184 (MKAILALADG…SEGYQQQTGE (184 aa)) form a CPSase region. L-glutamine contacts are provided by serine 45, glycine 236, and glycine 238. A Glutamine amidotransferase type-1 domain is found at 188–374 (KVVAYDFGIK…ADLMEKNRQS (187 aa)). The active-site Nucleophile is the cysteine 263. L-glutamine-binding residues include leucine 264, glutamine 267, asparagine 305, glycine 307, and phenylalanine 308. Catalysis depends on residues histidine 347 and glutamate 349.

The protein belongs to the CarA family. Composed of two chains; the small (or glutamine) chain promotes the hydrolysis of glutamine to ammonia, which is used by the large (or ammonia) chain to synthesize carbamoyl phosphate. Tetramer of heterodimers (alpha,beta)4.

It catalyses the reaction hydrogencarbonate + L-glutamine + 2 ATP + H2O = carbamoyl phosphate + L-glutamate + 2 ADP + phosphate + 2 H(+). It carries out the reaction L-glutamine + H2O = L-glutamate + NH4(+). The protein operates within amino-acid biosynthesis; L-arginine biosynthesis; carbamoyl phosphate from bicarbonate: step 1/1. It functions in the pathway pyrimidine metabolism; UMP biosynthesis via de novo pathway; (S)-dihydroorotate from bicarbonate: step 1/3. Its function is as follows. Small subunit of the glutamine-dependent carbamoyl phosphate synthetase (CPSase). CPSase catalyzes the formation of carbamoyl phosphate from the ammonia moiety of glutamine, carbonate, and phosphate donated by ATP, constituting the first step of 2 biosynthetic pathways, one leading to arginine and/or urea and the other to pyrimidine nucleotides. The small subunit (glutamine amidotransferase) binds and cleaves glutamine to supply the large subunit with the substrate ammonia. The polypeptide is Carbamoyl phosphate synthase small chain (Syntrophotalea carbinolica (strain DSM 2380 / NBRC 103641 / GraBd1) (Pelobacter carbinolicus)).